A 444-amino-acid polypeptide reads, in one-letter code: Phosphatidate cytidylyltransferase 2 (444 aa).

A compositionally biased stretch (basic and acidic residues) spans Met1 to Ala38. A disordered region spans residues Met1–Asp48. A Phosphoserine modification is found at Ser20. Residue Thr30 is modified to Phosphothreonine. A phosphoserine mark is found at Ser32, Ser34, and Ser36. Thr50 is subject to Phosphothreonine. Transmembrane regions (helical) follow at residues Met78 to Met98, Trp129 to Phe149, His165 to Val185, Leu212 to Ile232, Gly261 to Ser281, and Ile339 to Phe359.

Belongs to the CDS family. Homodimer. As to expression, ubiquitous. Expressed in the ganglion cell layer and inner nuclear layer of the retina.

Its subcellular location is the endoplasmic reticulum membrane. The enzyme catalyses a 1,2-diacyl-sn-glycero-3-phosphate + CTP + H(+) = a CDP-1,2-diacyl-sn-glycerol + diphosphate. The catalysed reaction is 1-octadecanoyl-2-(5Z,8Z,11Z,14Z-eicosatetraenoyl)-sn-glycero-3-phosphate + CTP + H(+) = 1-octadecanoyl-2-(5Z,8Z,11Z,14Z-eicosatetraenoyl)-sn-glycero-3-cytidine-5'-diphosphate + diphosphate. It catalyses the reaction 1-octadecanoyl-2-(9Z,12Z-octadecadienoyl)-sn-glycero-3-phosphate + CTP + H(+) = 1-octadecanoyl-2-(9Z,12Z-octadecadienoyl)-sn-glycero-3-cytidine-5'-diphosphate + diphosphate. It carries out the reaction 1-hexadecanoyl-2-(5Z,8Z,11Z,14Z-eicosatetraenoyl)-sn-glycero-3-phosphate + CTP + H(+) = 1-hexadecanoyl-2-(5Z,8Z,11Z,14Z-eicosatetraenoyl)-sn-glycero-3-cytidine-5'-diphosphate + diphosphate. The enzyme catalyses 1,2-di-(5Z,8Z,11Z,14Z)-eicosatetraenoyl-sn-glycero-3-phosphate + CTP + H(+) = 1,2-di-(5Z,8Z,11Z,14Z-eicosatetraenoyl)-sn-glycero-3-cytidine-5'-diphosphate + diphosphate. The catalysed reaction is 1-octadecanoyl-2-(9Z-octadecenoyl)-sn-glycero-3-phosphate + CTP + H(+) = 1-octadecanoyl-2-(9Z-octadecenoyl)-sn-glycero-3-cytidine-5'-diphosphate + diphosphate. It catalyses the reaction 1-octadecanoyl-2-(4Z,7Z,10Z,13Z,16Z,19Z-docosahexaenoyl)-sn-glycero-3-phosphate + CTP + H(+) = 1-octadecanoyl-2-(4Z,7Z,10Z,13Z,16Z,19Z-docosahexaenoyl)-sn-glycero-3-cytidine-5'-diphosphate + diphosphate. It carries out the reaction 1,2-di-(9Z,12Z-octadecadienoyl)-sn-glycero-3-phosphate + CTP + H(+) = 1,2-di-(9Z,12Z-octadecadienoyl)-sn-glycero-3-cytidine-5'-diphosphate + diphosphate. The enzyme catalyses 1,2-di-(9Z-octadecenoyl)-sn-glycero-3-phosphate + CTP + H(+) = 1,2-di-(9Z-octadecenoyl)-sn-glycero-3-cytidine-5'-diphosphate + diphosphate. It participates in phospholipid metabolism; CDP-diacylglycerol biosynthesis; CDP-diacylglycerol from sn-glycerol 3-phosphate: step 3/3. Functionally, catalyzes the conversion of phosphatidic acid (PA) to CDP-diacylglycerol (CDP-DAG), an essential intermediate in the synthesis of phosphatidylglycerol, cardiolipin and phosphatidylinositol. Exhibits specificity for the nature of the acyl chains at the sn-1 and sn-2 positions in the substrate, PA and the preferred acyl chain composition is 1-stearoyl-2-arachidonoyl-sn-phosphatidic acid. Plays an important role in regulating the growth and maturation of lipid droplets which are storage organelles at the center of lipid and energy homeostasis. This is Phosphatidate cytidylyltransferase 2 from Mus musculus (Mouse).